A 527-amino-acid polypeptide reads, in one-letter code: G patch domain-containing protein 2 (527 aa).

The interval 35-135 (LEESSEQARG…RPSSNLSSSV (101 aa)) is disordered. The segment covering 62–76 (RQARKRRGRKRRSYN) has biased composition (basic residues). Residues 97–116 (EPSKDYREKHSNNKKDRSDS) show a composition bias toward basic and acidic residues. 3 positions are modified to phosphoserine: S114, S116, and S145. Disordered stretches follow at residues 175 to 281 (SSKR…GDDE), 350 to 375 (TPSK…GSNK), and 480 to 527 (TPGS…GNPA). Over residues 186 to 196 (GCRDQDMDNDR) the composition is skewed to basic and acidic residues. Positions 206–215 (KKVKKRKLKG) are enriched in basic residues. Over residues 231-257 (SEERSQPNKDRMEYEEQKASDELRSES) the composition is skewed to basic and acidic residues. A G-patch domain is found at 466 to 512 (ESNIGNRMLQSMGWTPGSGLGRDGRGIAEPVQAVQRPKGLGLGFPLP). Positions 510 to 527 (PLPKSSPTSPAPTSGNPA) are enriched in low complexity.

In terms of assembly, interacts with DHX15.

The protein resides in the nucleus speckle. The protein localises to the nucleus. Its subcellular location is the nucleolus. Its function is as follows. Enhances the ATPase activity of DHX15 in vitro. The protein is G patch domain-containing protein 2 (Gpatch2) of Mus musculus (Mouse).